We begin with the raw amino-acid sequence, 381 residues long: Galactose-1-phosphate uridylyltransferase (381 aa).

Positions 65 and 68 each coordinate Zn(2+). A UDP-alpha-D-glucose-binding site is contributed by 90-91 (ND). Position 131 (H131) interacts with Zn(2+). N175 lines the UDP-alpha-D-glucose pocket. H186 serves as a coordination point for Zn(2+). The Tele-UMP-histidine intermediate role is filled by H188. Residue Q190 participates in UDP-alpha-D-glucose binding. Fe cation-binding residues include E204, H306, H323, and H325. UDP-alpha-D-glucose-binding positions include 338 to 341 (KFMV) and 343 to 344 (FE).

This sequence belongs to the galactose-1-phosphate uridylyltransferase type 1 family. In terms of assembly, homodimer. Requires Zn(2+) as cofactor.

The enzyme catalyses alpha-D-galactose 1-phosphate + UDP-alpha-D-glucose = alpha-D-glucose 1-phosphate + UDP-alpha-D-galactose. It participates in carbohydrate metabolism; galactose metabolism. This is Galactose-1-phosphate uridylyltransferase (GAL7) from Cryptococcus neoformans var. neoformans serotype D (strain B-3501A) (Filobasidiella neoformans).